An 84-amino-acid polypeptide reads, in one-letter code: Small ribosomal subunit protein uS17 (84 aa).

Belongs to the universal ribosomal protein uS17 family. As to quaternary structure, part of the 30S ribosomal subunit.

Its function is as follows. One of the primary rRNA binding proteins, it binds specifically to the 5'-end of 16S ribosomal RNA. The protein is Small ribosomal subunit protein uS17 of Shigella boydii serotype 18 (strain CDC 3083-94 / BS512).